We begin with the raw amino-acid sequence, 512 residues long: Ferredoxin--nitrite reductase (512 aa).

Residues Cys396, Cys402, Cys437, and Cys441 each contribute to the [4Fe-4S] cluster site. Cys441 provides a ligand contact to siroheme.

Belongs to the nitrite and sulfite reductase 4Fe-4S domain family.

It catalyses the reaction 6 oxidized [2Fe-2S]-[ferredoxin] + NH4(+) + 2 H2O = nitrite + 6 reduced [2Fe-2S]-[ferredoxin] + 8 H(+). In Synechococcus elongatus (strain ATCC 33912 / PCC 7942 / FACHB-805) (Anacystis nidulans R2), this protein is Ferredoxin--nitrite reductase (nirA).